The sequence spans 65 residues: Large ribosomal subunit protein bL35 (65 aa).

The protein belongs to the bacterial ribosomal protein bL35 family.

This is Large ribosomal subunit protein bL35 from Thermoanaerobacter sp. (strain X514).